The following is a 1400-amino-acid chain: MKSSGPVERLLRALGRRDSSRATSRPRKAEPHSFREKVFRKKTPVCAVCKVTIDGTGVSCRVCKVATHRKCEAKVTSSCQALPPAELRRSTAPVRRIEHLGSTKSLNHSKQRSTLPRSFSLDPLMERRWDLDLTYVTERILAAAFPARPDEQRHRGHLRELAHVLQSKHRDKYLLFNLSEKRHDLTRLNPKVQDFGWPELHAPPLDKLCSICKAMETWLSADPQHVVVLYCKGSKGKLGVIVSAYMHYSKISAGADQALATLTMRKFCEDKVATELQPSQRRYVSYFSGLLSGSIRMNSSPLFLHYVFVPVLPAFEPNTGFQPFLKIYQSMQLVYTSGVYRIAGPGPQQLCISLEPALLLKGDVMVTCYHKGGQGTDRTLVFRVQFHTCTIHGSRLTFPKDQLDEAWADERFPFQASVEFVFSSSPEKVKGNTPRNDPSVSVDYNTTEPAVRWDSYENFNQHHEDSVDGALAHTRGPLDGSPYAQVQRVPRQTPPAPSPELPPPPMLSVSSDSGHSSTLTTEHTAESPGRPPPTAAERQELDRLLGGCGVASAGRGAGRETAILDDEEQPSVGGGLHLGMYSGHRPGLSRRCSCRQGFREPCGVPNGSYYRPEGTLERRRPPYGGYEGHPQGYAEASVEKRRLCRSLSEGPYPYAPELGKPANGDFGYRPAGYREVVILEDPGVPALCSCPACEEKLALPTAALYGLRLEREAAEGWSSEVGKPLLHPVRPGHPLPLLVPACGHHHAPMPDYGCLKPPKVGEEGHEGCSYAVCSEGRYGHSGYPALVTYGYGGAVPSYCPAYGRAPHSCGSPSEGRGYPSPGAHSPRAGSVSPGSPPYLQPRKLGYEISAEDGRDKYPLSGHLASTGPLASTESPEPSWRDGSSGHSTLPRSPRDPQCSASSELSGPSTPLHTSSPVQGKESNRRQDTTRSPSLAPTQRLSPGEALPSVVQGVAEKTPELLTSSRPEQLDPSPFSQTSAPGSPNGWPQERSPGGHTNSASPRSPVPTTLPGLRHAPWQGPRGTSDSPDGSPLTPVPTQMPWLVGSPEPPQSSPTPAFPLATSYDANGPIQPPLPEKRHLPGSGQQPSPPARSTNQHVTFASPLPDVTQPPEHPLQENQSNVKFVQDTSKFWYKPHLSRDQAIALLKDKDPGAFLIRDSHSFQGAYGLALKVATPPPSAQPWKGDPSEQLVRHFLIETGPKGVKIKGCPTEPYFGSLSALVSQHSISPISLPCCLRIPSKDPLEETPEAPVPTNMSTAADLLRQGAACSVLYLTSVETESLTGPQAVAKASSAALSCSPVPVPAIVHFKVSAQGITLTDNQRKLFFRRHYPVNSITFSSTDPQDRRWTNPDGATSKIFGFVAKKPGSPWENVCHLFAELDPDQPASAIVTFITKVLLGQRK.

The segment at Pro31–Cys79 adopts a Phorbol-ester/DAG-type zinc-finger fold. At Thr91 the chain carries Phosphothreonine. Ser118 and Ser120 each carry phosphoserine. Residues Asp122–Ser294 enclose the Phosphatase tensin-type domain. Cys231 (phosphocysteine intermediate) is an active-site residue. One can recognise a C2 tensin-type domain in the interval Ser299 to Ser425. Residues Ser425 to Tyr444 are disordered. The span at Thr433–Tyr444 shows a compositional bias: polar residues. Ser455 is modified (phosphoserine). Residue Tyr456 is modified to Phosphotyrosine. Ser466 carries the phosphoserine modification. Thr474 carries the post-translational modification Phosphothreonine. Ser481 bears the Phosphoserine mark. Tyr483 is subject to Phosphotyrosine. The segment at Arg488–Ala536 is disordered. Positions Gln492–Met506 are enriched in pro residues. Arg555 carries the post-translational modification Omega-N-methylarginine. The interval Cys809–Leu1114 is disordered. 5 positions are modified to phosphoserine: Ser820, Ser825, Ser830, Ser832, and Ser835. Polar residues-rich tracts occupy residues Cys898–Val917 and Thr929–Leu940. Thr909 is subject to Phosphothreonine. 3 positions are modified to phosphoserine: Ser931, Ser941, and Ser972. Position 977 is a phosphothreonine (Thr977). Phosphoserine is present on residues Ser991 and Ser1003. Residues Pro1046–Ala1056 show a composition bias toward pro residues. Polar residues predominate over residues Ser1082–Thr1098. The residue at position 1087 (Ser1087) is a Phosphoserine. An SH2 domain is found at Trp1131–Ser1238. Thr1173 carries the phosphothreonine modification. At Ser1238 the chain carries Phosphoserine. The 134-residue stretch at Ala1266–Arg1399 folds into the PTB domain.

It belongs to the PTEN phosphatase protein family. As to quaternary structure, interacts with AXL. Interacts with SYK; leading to its phosphorylation. Interacts with SQSTM1 (via PB1 domain); the interaction leads to sequestration of TNS2 in cytoplasmic aggregates with SQSTM1 and promotes TNS2 ubiquitination and proteasomal degradation. In terms of processing, ubiquitinated following sequestration in cytoplasmic aggregates with SQSTM1, leading to proteasomal degradation. As to expression, in the adult kidney, expressed mainly in glomeruli (at protein level). In the newborn kidney, localizes on the basal surface of podocytes along the glomerular basement membrane and not in endothelial cells. Low expression levels in anabolic skeletal muscles.

The protein resides in the cell junction. It is found in the focal adhesion. The protein localises to the cell membrane. Its subcellular location is the cytoplasm. It carries out the reaction O-phospho-L-tyrosyl-[protein] + H2O = L-tyrosyl-[protein] + phosphate. Tyrosine-protein phosphatase which regulates cell motility, proliferation and muscle-response to insulin. Phosphatase activity is mediated by binding to phosphatidylinositol-3,4,5-triphosphate (PtdIns(3,4,5)P3) via the SH2 domain. In muscles and under catabolic conditions, dephosphorylates IRS1 leading to its degradation and muscle atrophy. Negatively regulates PI3K-AKT pathway activation. Dephosphorylates nephrin NPHS1 in podocytes which affects mTORC1 complex activity. Under normal glucose conditions, NPHS1 outcompetes IRS1 for binding to phosphatidylinositol 3-kinase (PI3K) which balances mTORC1 activity but high glucose conditions lead to up-regulation of TNS2, increased NPHS1 dephosphorylation and activation of mTORC1, contributing to podocyte hypertrophy and proteinuria. Required for correct podocyte morphology, podocyte-glomerular basement membrane interaction and integrity of the glomerular filtration barrier. Enhances RHOA activation in the presence of DLC1. Plays a role in promoting DLC1-dependent remodeling of the extracellular matrix. In Mus musculus (Mouse), this protein is Tensin-2 (Tns2).